A 1024-amino-acid chain; its full sequence is MAKIRVYELAKKLNMTNKALLTKLKAMNIEAKSHMSSLEDDTEARVRESLHGMKNKQADTRVKSSVIRRRRPPKPEPSVTELPDDEAAGSNGAAEEKITTPGPVTGDEMTETSTPAPVKSKIPLKAQTDSTNRPTPEDPVVKATELKPKKVTKPKSSPARVILRPDTPAKEEPTKAKEVPAAKEVPAAKEAPKVKETSKAVNVSEDEVNPLPTKNVELNSGDSKPDGALEEKSETDEKALEKEPTIKQEDTILEDNHARKEVRSVAVDDDDKNLDTAEAKDKKRKKKKVQKRSEPAKIIKMAVPISVRSRNKVKTEATQAPTSPQRPKVHPKPADKGPARAQAHRPDTGRDAVVLPGEGDGEVKRSKKKEWKKKGVGGPGVEFAPKGAPRKRKSVVEGKDLYEKGRSGKKGRRKDGRVKKTKTMKTQITVPKAIKRRIKIDEVIELSELAKRMGIKANEMIVKLMGMGVMATVNQTIDFDTACLVAAEFDYEVEKASVEEDIVLQVQEAEIDPDKLVSRPPVVTIMGHVDHGKTSLLDVIRKSKVATGEAGGITQHIGAYRVKTKKGTITFLDTPGHAAFTSMRSRGAQVTDLVVLVVAADDGVMPQTIEAINHSKAANVPVVVAVNKMDKPGADPDKVMRELSEHGLLAEDWGGDVIFAKVSAKTGKGIDGLLEMILLQSEVLELKANPDSPATGHVVEARLDAGRGPVATILVNQGTLKAGQPVVCGLYSGKIRVMIDDMGDDVEFAGPSTPVEIVGLSGVPEAGDEFVALDSEKDAKQVSDSRMQKQRAKVLAKRSRANLEKLFESMGADEIKELKLIIKADVHGSLEALNDSIMKLAQDEVDITIVHSGTGAINESDVSLAAVSDAIIIGFNVRPTPKVRSMAKDENVDMRFYDIIYNVINDIKAAITGLMPSTFHEVIIGRAEVRDTFVIPHKGLTIGGSFVLEGKIARGFKVRLLRDGVVKCDSTLSSLRRFKDDVKEVAHGYECGIGIERYNDIKIGDIFECYEIEERKAQVEQIKE.

A disordered region spans residues 33–425; the sequence is SHMSSLEDDT…GRVKKTKTMK (393 aa). Basic and acidic residues-rich tracts occupy residues 43-62, 135-148, 167-198, and 223-263; these read EARV…DTRV, TPED…ELKP, TPAK…KETS, and SKPD…KEVR. The segment covering 316-325 has biased composition (polar residues); that stretch reads EATQAPTSPQ. Positions 332–350 are enriched in basic and acidic residues; the sequence is KPADKGPARAQAHRPDTGR. The segment covering 365–375 has biased composition (basic residues); it reads RSKKKEWKKKG. The segment covering 394 to 406 has biased composition (basic and acidic residues); it reads SVVEGKDLYEKGR. Residues 407 to 423 show a composition bias toward basic residues; the sequence is SGKKGRRKDGRVKKTKT. Positions 518 to 687 constitute a tr-type G domain; it reads SRPPVVTIMG…LLQSEVLELK (170 aa). Residues 527–534 form a G1 region; that stretch reads GHVDHGKT. Position 527-534 (527-534) interacts with GTP; sequence GHVDHGKT. The interval 552–556 is G2; sequence GITQH. Positions 573–576 are G3; that stretch reads DTPG. GTP is bound by residues 573 to 577 and 627 to 630; these read DTPGH and NKMD. The tract at residues 627 to 630 is G4; sequence NKMD. The interval 663 to 665 is G5; sequence SAK.

This sequence belongs to the TRAFAC class translation factor GTPase superfamily. Classic translation factor GTPase family. IF-2 subfamily.

The protein resides in the cytoplasm. Functionally, one of the essential components for the initiation of protein synthesis. Protects formylmethionyl-tRNA from spontaneous hydrolysis and promotes its binding to the 30S ribosomal subunits. Also involved in the hydrolysis of GTP during the formation of the 70S ribosomal complex. The sequence is that of Translation initiation factor IF-2 from Desulforapulum autotrophicum (strain ATCC 43914 / DSM 3382 / VKM B-1955 / HRM2) (Desulfobacterium autotrophicum).